Consider the following 152-residue polypeptide: Xanthine-guanine phosphoribosyltransferase (152 aa).

5-phospho-alpha-D-ribose 1-diphosphate contacts are provided by residues 37–38 (RG) and 88–96 (DDLVDTGNT). D89 lines the Mg(2+) pocket. Positions 92 and 135 each coordinate guanine. Positions 92 and 135 each coordinate xanthine. Residues 92-96 (DTGNT) and 134-135 (WI) contribute to the GMP site.

It belongs to the purine/pyrimidine phosphoribosyltransferase family. XGPT subfamily. Homotetramer. Requires Mg(2+) as cofactor.

The protein resides in the cell inner membrane. It carries out the reaction GMP + diphosphate = guanine + 5-phospho-alpha-D-ribose 1-diphosphate. The catalysed reaction is XMP + diphosphate = xanthine + 5-phospho-alpha-D-ribose 1-diphosphate. The enzyme catalyses IMP + diphosphate = hypoxanthine + 5-phospho-alpha-D-ribose 1-diphosphate. Its pathway is purine metabolism; GMP biosynthesis via salvage pathway; GMP from guanine: step 1/1. The protein operates within purine metabolism; XMP biosynthesis via salvage pathway; XMP from xanthine: step 1/1. Functionally, purine salvage pathway enzyme that catalyzes the transfer of the ribosyl-5-phosphate group from 5-phospho-alpha-D-ribose 1-diphosphate (PRPP) to the N9 position of the 6-oxopurines guanine and xanthine to form the corresponding ribonucleotides GMP (guanosine 5'-monophosphate) and XMP (xanthosine 5'-monophosphate), with the release of PPi. To a lesser extent, also acts on hypoxanthine. The chain is Xanthine-guanine phosphoribosyltransferase from Actinobacillus succinogenes (strain ATCC 55618 / DSM 22257 / CCUG 43843 / 130Z).